A 396-amino-acid polypeptide reads, in one-letter code: Proteasome-activating nucleotidase (396 aa).

Residues 16 to 57 (VTYLKRRIRQLELQVRMLEADKERLERELSRLRSEMSRLRQP) adopt a coiled-coil conformation. ATP is bound by residues 181 to 186 (GCGKTL) and His-320. Residues 394–396 (IYG) form a docks into pockets in the proteasome alpha-ring to cause gate opening region.

The protein belongs to the AAA ATPase family. Homohexamer. The hexameric complex has a two-ring architecture resembling a top hat that caps the 20S proteasome core at one or both ends. Upon ATP-binding, the C-terminus of PAN interacts with the alpha-rings of the proteasome core by binding to the intersubunit pockets.

It localises to the cytoplasm. Functionally, ATPase which is responsible for recognizing, binding, unfolding and translocation of substrate proteins into the archaeal 20S proteasome core particle. Is essential for opening the gate of the 20S proteasome via an interaction with its C-terminus, thereby allowing substrate entry and access to the site of proteolysis. Thus, the C-termini of the proteasomal ATPase function like a 'key in a lock' to induce gate opening and therefore regulate proteolysis. Unfolding activity requires energy from ATP hydrolysis, whereas ATP binding alone promotes ATPase-20S proteasome association which triggers gate opening, and supports translocation of unfolded substrates. This chain is Proteasome-activating nucleotidase, found in Pyrococcus furiosus (strain ATCC 43587 / DSM 3638 / JCM 8422 / Vc1).